The chain runs to 392 residues: INCREASED PETAL GROWTH ANISOTROPY 1-like protein 1 (392 aa).

Positions 11–52 form a coiled coil; it reads LLRLVKELQAYLVRNDKLEKENHELRQEVARLRAQVSNLKSH. 2 stretches are compositionally biased toward polar residues: residues 65–76 and 100–109; these read QSSYDGSNTDGS and PTIQGQSTAT. Residues 65 to 128 form a disordered region; that stretch reads QSSYDGSNTD…SKRTLGKRSV (64 aa). The stretch at 269 to 299 forms a coiled coil; the sequence is KDSLTQALQRIQSLQDRLEESVNNTEKMRDS.

This sequence belongs to the IPGA1 family.

It localises to the cytoplasm. The protein localises to the cytoskeleton. Microtubule-associated protein probably involved in the regulation of microtubule organization. The protein is INCREASED PETAL GROWTH ANISOTROPY 1-like protein 1 of Arabidopsis thaliana (Mouse-ear cress).